A 389-amino-acid chain; its full sequence is S-adenosylmethionine synthase (389 aa).

His-15 contributes to the ATP binding site. Asp-17 is a Mg(2+) binding site. Glu-43 is a binding site for K(+). L-methionine contacts are provided by Glu-56 and Gln-99. The interval 99 to 109 (QSPDIAQGVNE) is flexible loop. ATP-binding positions include 166–168 (DAK), 234–235 (RF), Asp-243, 249–250 (RK), Ala-266, and Lys-270. Asp-243 contributes to the L-methionine binding site. Lys-274 is a binding site for L-methionine.

This sequence belongs to the AdoMet synthase family. Homotetramer; dimer of dimers. Requires Mg(2+) as cofactor. The cofactor is K(+).

The protein localises to the cytoplasm. The enzyme catalyses L-methionine + ATP + H2O = S-adenosyl-L-methionine + phosphate + diphosphate. Its pathway is amino-acid biosynthesis; S-adenosyl-L-methionine biosynthesis; S-adenosyl-L-methionine from L-methionine: step 1/1. Catalyzes the formation of S-adenosylmethionine (AdoMet) from methionine and ATP. The overall synthetic reaction is composed of two sequential steps, AdoMet formation and the subsequent tripolyphosphate hydrolysis which occurs prior to release of AdoMet from the enzyme. The polypeptide is S-adenosylmethionine synthase (Neisseria meningitidis serogroup C / serotype 2a (strain ATCC 700532 / DSM 15464 / FAM18)).